Here is a 192-residue protein sequence, read N- to C-terminus: UPF0149 protein YgfB (192 aa).

It belongs to the UPF0149 family.

The protein is UPF0149 protein YgfB of Salmonella agona (strain SL483).